Reading from the N-terminus, the 366-residue chain is MITLQRTPLFDVYAKYGGKTIDFGGWELPVQFSSIKEEHEAVRTAAGLFDVSHMGEVEVKGVDSLAFLQRVVTNDVSTLKVGGAQYTAMCYENGGTVDDLLIYKRGEEDYLLVINASNIEKDYEWLASHVIGDATVVNVSSEVAQLAIQGPKAEGILQKVVSEDLKEIKFFKFKNDILVDGIPALVSRTGYTGEDGFEIYCKSEDAAKLWEKLLEVGAEEGLKACGLGARDTLRFEATLPLYGQELSKDITPIEAGIGFAVKTNKEADFFGKATLKEQKENGAPRKLVGIEVIERGIPRTHYPVFIGEEKIGEVTSGTQSPTLKKSIGLALIDVKYAAVDTEVEIEIRNKRVKAVVVPTPFYKRSK.

Belongs to the GcvT family. The glycine cleavage system is composed of four proteins: P, T, L and H.

It catalyses the reaction N(6)-[(R)-S(8)-aminomethyldihydrolipoyl]-L-lysyl-[protein] + (6S)-5,6,7,8-tetrahydrofolate = N(6)-[(R)-dihydrolipoyl]-L-lysyl-[protein] + (6R)-5,10-methylene-5,6,7,8-tetrahydrofolate + NH4(+). Its function is as follows. The glycine cleavage system catalyzes the degradation of glycine. The protein is Aminomethyltransferase of Bacillus anthracis (strain A0248).